The chain runs to 307 residues: Malonyl-[acyl-carrier protein] O-methyltransferase (307 aa).

This sequence belongs to the methyltransferase superfamily.

It catalyses the reaction malonyl-[ACP] + S-adenosyl-L-methionine = malonyl-[ACP] methyl ester + S-adenosyl-L-homocysteine. Its pathway is cofactor biosynthesis; biotin biosynthesis. Its function is as follows. Converts the free carboxyl group of a malonyl-thioester to its methyl ester by transfer of a methyl group from S-adenosyl-L-methionine (SAM). It allows to synthesize pimeloyl-ACP via the fatty acid synthetic pathway. This is Malonyl-[acyl-carrier protein] O-methyltransferase from Nitrosospira multiformis (strain ATCC 25196 / NCIMB 11849 / C 71).